The chain runs to 363 residues: S-adenosylmethionine:tRNA ribosyltransferase-isomerase (363 aa).

The protein belongs to the QueA family. Monomer.

It localises to the cytoplasm. The enzyme catalyses 7-aminomethyl-7-carbaguanosine(34) in tRNA + S-adenosyl-L-methionine = epoxyqueuosine(34) in tRNA + adenine + L-methionine + 2 H(+). It participates in tRNA modification; tRNA-queuosine biosynthesis. Transfers and isomerizes the ribose moiety from AdoMet to the 7-aminomethyl group of 7-deazaguanine (preQ1-tRNA) to give epoxyqueuosine (oQ-tRNA). This chain is S-adenosylmethionine:tRNA ribosyltransferase-isomerase, found in Brucella anthropi (strain ATCC 49188 / DSM 6882 / CCUG 24695 / JCM 21032 / LMG 3331 / NBRC 15819 / NCTC 12168 / Alc 37) (Ochrobactrum anthropi).